The sequence spans 1180 residues: RecBCD enzyme subunit RecB (1180 aa).

One can recognise a UvrD-like helicase ATP-binding domain in the interval S2 to A450. Residues S2–L853 are ATPase, DNA-binding and helicase activity, interacts with RecC. ATP is bound at residue A23 to T30. The DNA-binding element occupies I252–R254. W447 contributes to the ATP binding site. Residues S480–G746 enclose the UvrD-like helicase C-terminal domain. 3 consecutive DNA-binding regions follow at residues V511–G512, S560–R561, and R761. The nuclease activity, interacts with RecD and RecA stretch occupies residues N900–A1180. 4 residues coordinate Mg(2+): H956, D1067, D1080, and Y1081. D1080 functions as the For nuclease activity in the catalytic mechanism.

Belongs to the helicase family. UvrD subfamily. Heterotrimer of RecB, RecC and RecD. All subunits contribute to DNA-binding. The C-terminus interacts with RecA. Interacts with YgbT (Cas1). As to quaternary structure, (Microbial infection) Lambda virus GamS protein interacts with the enzyme without displacing any of the subunits. Requires Mg(2+) as cofactor.

It carries out the reaction Exonucleolytic cleavage (in the presence of ATP) in either 5'- to 3'- or 3'- to 5'-direction to yield 5'-phosphooligonucleotides.. The catalysed reaction is Couples ATP hydrolysis with the unwinding of duplex DNA by translocating in the 3'-5' direction.. It catalyses the reaction ATP + H2O = ADP + phosphate + H(+). Its activity is regulated as follows. After reacting with DNA bearing a Chi site the holoenzyme is disassembled and loses exonuclease activity, DNA unwinding and Chi-directed DNA cleavage; RecB remains complexed with ssDNA, which may prevent holoenzyme reassembly. High levels of Mg(2+) (13 mM MgCl(2+)) or incubation with DNase allows holoenzyme reassembly, suggesting it is DNA bound to RecB that prevents reassembly. (Microbial infection) RecBCD is inhibited by the lambda virus gam protein (both GamL and GamS isoforms); in vitro a short preincubation prior to adding DNA results in maximal inhibition. A helicase/nuclease that prepares dsDNA breaks (DSB) for recombinational DNA repair. Binds to DSBs and unwinds DNA via a rapid (&gt;1 kb/second) and highly processive (&gt;30 kb) ATP-dependent bidirectional helicase. Unwinds dsDNA until it encounters a Chi (crossover hotspot instigator, 5'-GCTGGTGG-3') sequence from the 3' direction. Cuts ssDNA a few nucleotides 3' to Chi site, by nicking one strand or switching the strand degraded (depending on the reaction conditions). The properties and activities of the enzyme are changed at Chi. The Chi-altered holoenzyme produces a long 3'-ssDNA overhang which facilitates RecA-binding to the ssDNA for homologous DNA recombination and repair. Holoenzyme degrades any linearized DNA that is unable to undergo homologous recombination. In the holoenzyme this subunit contributes ATPase, 3'-5' helicase, exonuclease activity and loads RecA onto ssDNA. The RecBC complex requires the RecD subunit for nuclease activity, but can translocate along ssDNA in both directions. The RecBCD complex does not unwind G-quadruplex DNA. Probably interacts with a component of retron Ec48 which moniters RecBCD stability; when RecB is missing or impaired the retron is activated and becomes toxic. The chain is RecBCD enzyme subunit RecB from Escherichia coli (strain K12).